Here is a 145-residue protein sequence, read N- to C-terminus: Phospholipase A2, membrane associated (145 aa).

Positions 1–20 are cleaved as a signal peptide; sequence MKLLLLLLVVMASDLPQAHG. 7 disulfide bridges follow: Cys46/Cys138, Cys48/Cys64, Cys63/Cys118, Cys69/Cys145, Cys70/Cys111, Cys79/Cys104, and Cys97/Cys109. The Ca(2+) site is built by His47, Gly49, and Gly51. His67 is a catalytic residue. Asp68 serves as a coordination point for Ca(2+). Asp112 is an active-site residue.

The protein belongs to the phospholipase A2 family. Ca(2+) is required as a cofactor. Alveolar macrophages, and at much lower levels in peripheral blood monocytes and peritoneal macrophages.

It is found in the secreted. It localises to the cell membrane. Its subcellular location is the mitochondrion outer membrane. The enzyme catalyses a 1,2-diacyl-sn-glycero-3-phosphoethanolamine + H2O = a 1-acyl-sn-glycero-3-phosphoethanolamine + a fatty acid + H(+). It carries out the reaction 1-hexadecanoyl-2-(9Z-octadecenoyl)-sn-glycero-3-phosphoethanolamine + H2O = 1-hexadecanoyl-sn-glycero-3-phosphoethanolamine + (9Z)-octadecenoate + H(+). It catalyses the reaction 1-hexadecanoyl-2-(9Z,12Z-octadecadienoyl)-sn-glycero-3-phosphoethanolamine + H2O = 1-hexadecanoyl-sn-glycero-3-phosphoethanolamine + (9Z,12Z)-octadecadienoate + H(+). The catalysed reaction is 1-hexadecanoyl-2-(5Z,8Z,11Z,14Z-eicosatetraenoyl)-sn-glycero-3-phosphoethanolamine + H2O = 1-hexadecanoyl-sn-glycero-3-phosphoethanolamine + (5Z,8Z,11Z,14Z)-eicosatetraenoate + H(+). The enzyme catalyses N-hexadecanoyl-1,2-di-(9Z-octadecenoyl)-sn-glycero-3-phosphoethanolamine + H2O = N-hexadecanoyl-1-(9Z-octadecenoyl)-sn-glycero-3-phosphoethanolamine + (9Z)-octadecenoate + H(+). It carries out the reaction 1,2-dihexadecanoyl-sn-glycero-3-phospho-(1'-sn-glycerol) + H2O = 1-hexadecanoyl-sn-glycero-3-phospho-(1'-sn-glycerol) + hexadecanoate + H(+). It catalyses the reaction 1-hexadecanoyl-2-(9Z-octadecenoyl)-sn-glycero-3-phosphoglycerol + H2O = 1-hexadecanoyl-sn-glycero-3-phosphoglycerol + (9Z)-octadecenoate + H(+). The catalysed reaction is 1-hexadecanoyl-2-(9Z-octadecenoyl)-sn-glycero-3-phospho-(1'-sn-glycerol) + H2O = 1-hexadecanoyl-sn-glycero-3-phospho-(1'-sn-glycerol) + (9Z)-octadecenoate + H(+). The enzyme catalyses a 1,2-diacyl-sn-glycero-3-phosphocholine + H2O = a 1-acyl-sn-glycero-3-phosphocholine + a fatty acid + H(+). It carries out the reaction 1,2-dihexadecanoyl-sn-glycero-3-phosphocholine + H2O = 1-hexadecanoyl-sn-glycero-3-phosphocholine + hexadecanoate + H(+). It catalyses the reaction 1-hexadecanoyl-2-(9Z-octadecenoyl)-sn-glycero-3-phosphocholine + H2O = 1-hexadecanoyl-sn-glycero-3-phosphocholine + (9Z)-octadecenoate + H(+). The catalysed reaction is 1-hexadecanoyl-2-(9Z,12Z-octadecadienoyl)-sn-glycero-3-phosphocholine + H2O = (9Z,12Z)-octadecadienoate + 1-hexadecanoyl-sn-glycero-3-phosphocholine + H(+). The enzyme catalyses 1-hexadecanoyl-2-(4Z,7Z,10Z,13Z,16Z,19Z-docosahexaenoyl)-sn-glycero-3-phosphocholine + H2O = (4Z,7Z,10Z,13Z,16Z,19Z)-docosahexaenoate + 1-hexadecanoyl-sn-glycero-3-phosphocholine + H(+). Functionally, secretory calcium-dependent phospholipase A2 that primarily targets extracellular phospholipids with implications in host antimicrobial defense, inflammatory response and tissue regeneration. Hydrolyzes the ester bond of the fatty acyl group attached at sn-2 position of phospholipids (phospholipase A2 activity) with preference for phosphatidylethanolamines and phosphatidylglycerols over phosphatidylcholines. Contributes to lipid remodeling of cellular membranes and generation of lipid mediators involved in pathogen clearance. Displays bactericidal activity against Gram-positive bacteria by directly hydrolyzing phospholipids of the bacterial membrane. Upon sterile inflammation, targets membrane phospholipids of extracellular mitochondria released from activated platelets, generating free unsaturated fatty acids such as arachidonate that is used by neighboring leukocytes to synthesize inflammatory eicosanoids such as leukotrienes. Simultaneously, by compromising mitochondrial membrane integrity, promotes the release in circulation of potent damage-associated molecular pattern molecules that activate the innate immune response. Plays a stem cell regulator role in the intestinal crypt. Within intracellular compartment mediates Paneth cell differentiation and its stem cell supporting functions by inhibiting Wnt signaling pathway in intestinal stem cell (ICS). Secreted in the intestinal lumen upon inflammation, acts in an autocrine way and promotes prostaglandin E2 synthesis that stimulates Wnt signaling pathway in ICS cells and tissue regeneration. May play a role in the biosynthesis of N-acyl ethanolamines that regulate energy metabolism and inflammation. Hydrolyzes N-acyl phosphatidylethanolamines to N-acyl lysophosphatidylethanolamines, which are further cleaved by a lysophospholipase D to release N-acyl ethanolamines. Independent of its catalytic activity, acts as a ligand for integrins. Binds to and activates integrins ITGAV:ITGB3, ITGA4:ITGB1 and ITGA5:ITGB1. Binds to a site (site 2) which is distinct from the classical ligand-binding site (site 1) and induces integrin conformational changes and enhanced ligand binding to site 1. Induces cell proliferation in an integrin-dependent manner. The chain is Phospholipase A2, membrane associated (PLA2G2A) from Cavia porcellus (Guinea pig).